The sequence spans 31 residues: Mu-conotoxin SmIIIA (31 aa).

The propeptide occupies 1–6 (PLFDKR). Gln7 is subject to Pyrrolidone carboxylic acid. 3 disulfide bridges follow: Cys9–Cys21, Cys10–Cys27, and Cys16–Cys28. Cys28 is subject to Cysteine amide.

This sequence belongs to the conotoxin M superfamily. Post-translationally, smIIIA' is a putative isoform where the N-terminal AA is missing. Expressed by the venom duct.

The protein resides in the secreted. Mu-conotoxins block voltage-gated sodium channels (Nav). This toxin blocks rNav1.5/SCN5A (IC(50) is 1.3 uM), rNav1.6/SCN8A (IC(50) is 160 nM), rNav1.7/SCN9A (IC(50) is 1.3 uM), rNav1.1/SCN1A (K(d) is 3.8 nM), rNav1.2/SCN2A (K(d) is 1.3 nM), rNav1.4/SCN4A (K(d) is 0.22 nM), rNav1.6/SCN8A (K(d) is 69 nM), and rNav1.7/SCN9A (K(d) is 260 nM). This toxin is very potent but weakly discriminating among sodium channels. The block of these channels is modified when beta-subunits are coexpressed with alpha subunits. Hence, blocks of channels containing beta-1 and beta-3 subunits are more potent (compared to channels without beta subunits), whereas blocks of channels containing beta-2 and beta-4 subunits are less potent (compared to channels without beta subunits). The polypeptide is Mu-conotoxin SmIIIA (Conus stercusmuscarum (Fly-specked cone)).